Reading from the N-terminus, the 338-residue chain is DNA-directed RNA polymerase subunit alpha (338 aa).

The interval 1-225 (MLISQRPTIT…ELFGLARELN (225 aa)) is alpha N-terminal domain (alpha-NTD). Positions 240 to 338 (TEYIAAYSMP…YIDVEAEDSE (99 aa)) are alpha C-terminal domain (alpha-CTD). Residues 319-338 (LEGYDAETGGYIDVEAEDSE) form a disordered region.

The protein belongs to the RNA polymerase alpha chain family. Homodimer. The RNAP catalytic core consists of 2 alpha, 1 beta, 1 beta' and 1 omega subunit. When a sigma factor is associated with the core the holoenzyme is formed, which can initiate transcription.

It carries out the reaction RNA(n) + a ribonucleoside 5'-triphosphate = RNA(n+1) + diphosphate. DNA-dependent RNA polymerase catalyzes the transcription of DNA into RNA using the four ribonucleoside triphosphates as substrates. This is DNA-directed RNA polymerase subunit alpha from Corynebacterium glutamicum (strain R).